Consider the following 196-residue polypeptide: DnaA initiator-associating protein DiaA (196 aa).

The 163-residue stretch at 34–196 folds into the SIS domain; it reads LVQSLLNGNK…DSTLFPHQDE (163 aa).

This sequence belongs to the SIS family. DiaA subfamily. Homotetramer; dimer of dimers.

In terms of biological role, required for the timely initiation of chromosomal replication via direct interactions with the DnaA initiator protein. In Serratia proteamaculans (strain 568), this protein is DnaA initiator-associating protein DiaA.